A 362-amino-acid polypeptide reads, in one-letter code: UDP-N-acetylglucosamine--N-acetylmuramyl-(pentapeptide) pyrophosphoryl-undecaprenol N-acetylglucosamine transferase (362 aa).

UDP-N-acetyl-alpha-D-glucosamine contacts are provided by residues 15 to 17, N127, R165, S191, I247, 266 to 271, and Q292; these read TGG and ALTVSE.

The protein belongs to the glycosyltransferase 28 family. MurG subfamily.

The protein resides in the cell inner membrane. It catalyses the reaction di-trans,octa-cis-undecaprenyl diphospho-N-acetyl-alpha-D-muramoyl-L-alanyl-D-glutamyl-meso-2,6-diaminopimeloyl-D-alanyl-D-alanine + UDP-N-acetyl-alpha-D-glucosamine = di-trans,octa-cis-undecaprenyl diphospho-[N-acetyl-alpha-D-glucosaminyl-(1-&gt;4)]-N-acetyl-alpha-D-muramoyl-L-alanyl-D-glutamyl-meso-2,6-diaminopimeloyl-D-alanyl-D-alanine + UDP + H(+). It functions in the pathway cell wall biogenesis; peptidoglycan biosynthesis. Cell wall formation. Catalyzes the transfer of a GlcNAc subunit on undecaprenyl-pyrophosphoryl-MurNAc-pentapeptide (lipid intermediate I) to form undecaprenyl-pyrophosphoryl-MurNAc-(pentapeptide)GlcNAc (lipid intermediate II). This is UDP-N-acetylglucosamine--N-acetylmuramyl-(pentapeptide) pyrophosphoryl-undecaprenol N-acetylglucosamine transferase from Shewanella baltica (strain OS155 / ATCC BAA-1091).